Reading from the N-terminus, the 308-residue chain is Glycine--tRNA ligase alpha subunit (308 aa).

The protein belongs to the class-II aminoacyl-tRNA synthetase family. As to quaternary structure, tetramer of two alpha and two beta subunits.

It localises to the cytoplasm. It catalyses the reaction tRNA(Gly) + glycine + ATP = glycyl-tRNA(Gly) + AMP + diphosphate. The protein is Glycine--tRNA ligase alpha subunit of Polaromonas naphthalenivorans (strain CJ2).